We begin with the raw amino-acid sequence, 459 residues long: MPRMFGTDGVRGLANRDLTAQLALDLGDAAVRVLGDDERSEFESRRRALVGRDTRVSGDFLAAALSAGMSAGGFDVIDAGIIPTPGVAYLTSVLNVEMGAVISASHNPMPDNGIKFFARGGFKLPDTKEDEIEAVLGQDWDRPTGAGVGRVSHDTATATNLYIDHLVSAIAPVGPDKSQPTPLKGLKIVADCANGATSVVAPEALRRAGADVTVINASPDGYNINKNAGSTHPEQLQAMVKASGAVMGVAFDGDADRCLAVDEDGNMVNGDQIMGILARAKKNAGKLNHDTLVVTVMSNLGLKLALRSMGIKTVQTNVGDRYVLEEMLRGDYSLGGEQSGHVINREFATTGDGTLTALTLCNEVVKSGKSLKELAADFPQLPQTLINVPNVDKMAAKTNAKVQAAVEREEKLLGDTGRVLLRPSGTEPLVRVMAEAETQQQADEVCDRLAKVVADELTL.

Ser105 functions as the Phosphoserine intermediate in the catalytic mechanism. Mg(2+)-binding residues include Ser105, Asp252, Asp254, and Asp256. A Phosphoserine modification is found at Ser105.

The protein belongs to the phosphohexose mutase family. Mg(2+) serves as cofactor. In terms of processing, activated by phosphorylation.

It carries out the reaction alpha-D-glucosamine 1-phosphate = D-glucosamine 6-phosphate. In terms of biological role, catalyzes the conversion of glucosamine-6-phosphate to glucosamine-1-phosphate. In Bifidobacterium adolescentis (strain ATCC 15703 / DSM 20083 / NCTC 11814 / E194a), this protein is Phosphoglucosamine mutase.